Consider the following 150-residue polypeptide: Transcriptional regulator MraZ (150 aa).

SpoVT-AbrB domains are found at residues 7–55 and 84–127; these read SHAI…PEPE and AALM…SEES.

This sequence belongs to the MraZ family. In terms of assembly, forms oligomers.

It localises to the cytoplasm. The protein localises to the nucleoid. This is Transcriptional regulator MraZ from Marinobacter nauticus (strain ATCC 700491 / DSM 11845 / VT8) (Marinobacter aquaeolei).